A 34-amino-acid polypeptide reads, in one-letter code: Photosystem I reaction center subunit XII (34 aa).

The helical transmembrane segment at 9 to 29 threads the bilayer; the sequence is LIALSLIVVVHAGVLALRLGI.

Belongs to the PsaM family.

It localises to the cellular thylakoid membrane. The polypeptide is Photosystem I reaction center subunit XII (Prochlorococcus marinus (strain MIT 9312)).